A 229-amino-acid chain; its full sequence is Rab-like protein 2A (229 aa).

Residues 28–35 (GDSAVGKS), 76–80 (DTAGQ), and 133–136 (NKID) each bind GTP. The interval 200-229 (NLEQEEEDVPDQEQSGSIETPSEEVASPHS) is disordered.

The protein belongs to the small GTPase superfamily. Rab family. As to quaternary structure, interacts with IFT27, IFT81, IFT172, ATP6V1E1, HK1, LDHC, MAPRE1 and HSPA2.

Plays an essential role in male fertility, sperm intra-flagellar transport, and tail assembly. Binds, in a GTP-regulated manner, to a specific set of effector proteins including key proteins involved in cilia development and function and delivers them into the growing sperm tail. This chain is Rab-like protein 2A (RABL2A), found in Pongo abelii (Sumatran orangutan).